The primary structure comprises 464 residues: Glutamate--tRNA ligase 1 (464 aa).

The 'HIGH' region motif lies at 10–20 (PSPTGYLHIGG). Residues 238–242 (KLSKR) carry the 'KMSKS' region motif. K241 is a binding site for ATP.

The protein belongs to the class-I aminoacyl-tRNA synthetase family. Glutamate--tRNA ligase type 1 subfamily. As to quaternary structure, monomer.

The protein resides in the cytoplasm. The enzyme catalyses tRNA(Glu) + L-glutamate + ATP = L-glutamyl-tRNA(Glu) + AMP + diphosphate. Its function is as follows. Catalyzes the attachment of glutamate to tRNA(Glu) in a two-step reaction: glutamate is first activated by ATP to form Glu-AMP and then transferred to the acceptor end of tRNA(Glu). This is Glutamate--tRNA ligase 1 from Helicobacter hepaticus (strain ATCC 51449 / 3B1).